The primary structure comprises 212 residues: ATP-dependent dethiobiotin synthetase BioD (212 aa).

13 to 18 serves as a coordination point for ATP; it reads GIGKTV. T17 serves as a coordination point for Mg(2+). K33 is an active-site residue. E100 lines the Mg(2+) pocket. ATP contacts are provided by residues 100–103 and 184–186; these read EGAG and PHV.

Belongs to the dethiobiotin synthetase family. In terms of assembly, homodimer. Mg(2+) is required as a cofactor.

It localises to the cytoplasm. It catalyses the reaction (7R,8S)-7,8-diammoniononanoate + CO2 + ATP = (4R,5S)-dethiobiotin + ADP + phosphate + 3 H(+). Its pathway is cofactor biosynthesis; biotin biosynthesis; biotin from 7,8-diaminononanoate: step 1/2. Catalyzes a mechanistically unusual reaction, the ATP-dependent insertion of CO2 between the N7 and N8 nitrogen atoms of 7,8-diaminopelargonic acid (DAPA, also called 7,8-diammoniononanoate) to form a ureido ring. The sequence is that of ATP-dependent dethiobiotin synthetase BioD from Nitrobacter hamburgensis (strain DSM 10229 / NCIMB 13809 / X14).